The sequence spans 334 residues: tRNA-dihydrouridine synthase B (334 aa).

FMN contacts are provided by residues 16–18 (PMA) and glutamine 70. The active-site Proton donor is cysteine 100. Residues lysine 139, 200–202 (NGD), and 224–225 (GR) contribute to the FMN site.

The protein belongs to the Dus family. DusB subfamily. It depends on FMN as a cofactor.

The catalysed reaction is a 5,6-dihydrouridine in tRNA + NAD(+) = a uridine in tRNA + NADH + H(+). It carries out the reaction a 5,6-dihydrouridine in tRNA + NADP(+) = a uridine in tRNA + NADPH + H(+). Functionally, catalyzes the synthesis of 5,6-dihydrouridine (D), a modified base found in the D-loop of most tRNAs, via the reduction of the C5-C6 double bond in target uridines. The chain is tRNA-dihydrouridine synthase B from Serratia marcescens.